A 786-amino-acid polypeptide reads, in one-letter code: Receptor-interacting serine/threonine-protein kinase 4 (786 aa).

In terms of domain architecture, Protein kinase spans 22-286 (FAGWEKVGSG…QEITSETEDL (265 aa)). Residues 28 to 36 (VGSGGFGQV) and lysine 51 each bind ATP. Lysine 51 participates in a covalent cross-link: Glycyl lysine isopeptide (Lys-Gly) (interchain with G-Cter in ubiquitin). Aspartate 143 functions as the Proton acceptor in the catalytic mechanism. Residue lysine 145 forms a Glycyl lysine isopeptide (Lys-Gly) (interchain with G-Cter in ubiquitin) linkage. Disordered regions lie at residues 293 to 328 (EVKDLAHEPGEKSSLESKSEARPESSRLKRASAPPF) and 347 to 378 (QTLEGPEELSRSSSECKLPSSSSGKRLSGVSS). A compositionally biased stretch (basic and acidic residues) spans 295–319 (KDLAHEPGEKSSLESKSEARPESSR). Residues 357–378 (RSSSECKLPSSSSGKRLSGVSS) are compositionally biased toward low complexity. 10 ANK repeats span residues 439–468 (SSASLLHLAVEAGQEECVKWLLLNNANPNL), 472–501 (KGSTPLHMAVERKGRGIVELLLARKTSVNA), 505–534 (DQWTALHFAAQNGDEASTRLLLEKNASVNE), 538–567 (EGRTPMHVACQHGQENIVRTLLRRGVDVGL), 571–601 (DAWLPLHYAAWQGHLPIVKLLAKQPGVSVNA), 605–634 (DGRTPLHLAAQRGHYRVARILIDLCSDVNI), 638–667 (QAQTPLHVAAETGHTSTARLLLHRGAGKEA), 671–700 (EGYTALHLAAQNGHLATVKLLIEEKADVMA), 704–734 (LNQTALHLAAARGHSEVVEELVSADLIDLSD), and 736–765 (QGLSALHLAAQGRHSQTVETLLKHGAHINL).

This sequence belongs to the protein kinase superfamily. TKL Ser/Thr protein kinase family. As to quaternary structure, interacts with PRKCB. Interacts with TRAF1, TRAF2, TRAF3 and TRAF5. Interacts with BIRC2/c-IAP1, BIRC3/c-IAP2 and XIAP/BIRC4. In terms of processing, may be phosphorylated by MAP3K2 and MAP3K3. Post-translationally, proteolytically cleaved by during Fas-induced apoptosis. Cleavage at Asp-342 and Asp-380. Polyubiquitinated with 'Lys-48' and 'Lys-63'-linked chains by BIRC2/c-IAP1 and BIRC3/c-IAP2, leading to activation of NF-kappa-B. Expressed in the epidermis of the skin (at protein level). Ubiquitously expressed, with an abundant expression in the thymus, bone marrow, pro-B, pre-B and immature B cells and a weak expression in the spleen.

The protein localises to the cytoplasm. The protein resides in the membrane. It catalyses the reaction L-seryl-[protein] + ATP = O-phospho-L-seryl-[protein] + ADP + H(+). The catalysed reaction is L-threonyl-[protein] + ATP = O-phospho-L-threonyl-[protein] + ADP + H(+). Functionally, serine/threonine protein kinase. Required for embryonic skin development and correct skin homeostasis in adults, via phosphorylation of PKP1 and subsequent promotion of keratinocyte differentiation and cell adhesion. It is a direct transcriptional target of TP63. Plays a role in NF-kappa-B activation. The sequence is that of Receptor-interacting serine/threonine-protein kinase 4 (Ripk4) from Mus musculus (Mouse).